Consider the following 462-residue polypeptide: Argininosuccinate lyase (462 aa).

It belongs to the lyase 1 family. Argininosuccinate lyase subfamily.

It localises to the cytoplasm. The catalysed reaction is 2-(N(omega)-L-arginino)succinate = fumarate + L-arginine. The protein operates within amino-acid biosynthesis; L-arginine biosynthesis; L-arginine from L-ornithine and carbamoyl phosphate: step 3/3. This Exiguobacterium sp. (strain ATCC BAA-1283 / AT1b) protein is Argininosuccinate lyase.